The chain runs to 345 residues: Phosphoribosylformylglycinamidine cyclo-ligase (345 aa).

It belongs to the AIR synthase family.

The protein localises to the cytoplasm. The enzyme catalyses 2-formamido-N(1)-(5-O-phospho-beta-D-ribosyl)acetamidine + ATP = 5-amino-1-(5-phospho-beta-D-ribosyl)imidazole + ADP + phosphate + H(+). It participates in purine metabolism; IMP biosynthesis via de novo pathway; 5-amino-1-(5-phospho-D-ribosyl)imidazole from N(2)-formyl-N(1)-(5-phospho-D-ribosyl)glycinamide: step 2/2. In Bifidobacterium longum subsp. infantis (strain ATCC 15697 / DSM 20088 / JCM 1222 / NCTC 11817 / S12), this protein is Phosphoribosylformylglycinamidine cyclo-ligase.